Here is a 96-residue protein sequence, read N- to C-terminus: uncharacterized protein (96 aa).

Transmembrane regions (helical) follow at residues phenylalanine 2–phenylalanine 22, alanine 38–leucine 58, and leucine 68–valine 88.

The protein resides in the membrane. This is an uncharacterized protein from Schizosaccharomyces pombe (strain 972 / ATCC 24843) (Fission yeast).